The following is an 85-amino-acid chain: METVVAFTAIAVSIMIGLAALGTALGFGILGGKFLEAAARQPELAPQLQVKMFIVAGLIDAIAMIGVAVALLFTFANPFLTQVAG.

Transmembrane regions (helical) follow at residues 10-30 and 53-73; these read IAVS…FGIL and FIVA…ALLF.

It belongs to the ATPase C chain family. As to quaternary structure, F-type ATPases have 2 components, F(1) - the catalytic core - and F(0) - the membrane proton channel. F(1) has five subunits: alpha(3), beta(3), gamma(1), delta(1), epsilon(1). F(0) has three main subunits: a(1), b(2) and c(10-14). The alpha and beta chains form an alternating ring which encloses part of the gamma chain. F(1) is attached to F(0) by a central stalk formed by the gamma and epsilon chains, while a peripheral stalk is formed by the delta and b chains.

It is found in the cell inner membrane. Functionally, f(1)F(0) ATP synthase produces ATP from ADP in the presence of a proton or sodium gradient. F-type ATPases consist of two structural domains, F(1) containing the extramembraneous catalytic core and F(0) containing the membrane proton channel, linked together by a central stalk and a peripheral stalk. During catalysis, ATP synthesis in the catalytic domain of F(1) is coupled via a rotary mechanism of the central stalk subunits to proton translocation. Key component of the F(0) channel; it plays a direct role in translocation across the membrane. A homomeric c-ring of between 10-14 subunits forms the central stalk rotor element with the F(1) delta and epsilon subunits. The chain is ATP synthase subunit c from Idiomarina loihiensis (strain ATCC BAA-735 / DSM 15497 / L2-TR).